The sequence spans 96 residues: Co-chaperonin GroES (96 aa).

Belongs to the GroES chaperonin family. As to quaternary structure, heptamer of 7 subunits arranged in a ring. Interacts with the chaperonin GroEL.

It localises to the cytoplasm. Together with the chaperonin GroEL, plays an essential role in assisting protein folding. The GroEL-GroES system forms a nano-cage that allows encapsulation of the non-native substrate proteins and provides a physical environment optimized to promote and accelerate protein folding. GroES binds to the apical surface of the GroEL ring, thereby capping the opening of the GroEL channel. The sequence is that of Co-chaperonin GroES from Actinobacillus pleuropneumoniae serotype 5b (strain L20).